The sequence spans 492 residues: ATP synthase subunit beta, chloroplastic (492 aa).

170–177 provides a ligand contact to ATP; the sequence is GGAGVGKT.

This sequence belongs to the ATPase alpha/beta chains family. In terms of assembly, F-type ATPases have 2 components, CF(1) - the catalytic core - and CF(0) - the membrane proton channel. CF(1) has five subunits: alpha(3), beta(3), gamma(1), delta(1), epsilon(1). CF(0) has four main subunits: a(1), b(1), b'(1) and c(9-12).

Its subcellular location is the plastid. The protein localises to the chloroplast thylakoid membrane. It carries out the reaction ATP + H2O + 4 H(+)(in) = ADP + phosphate + 5 H(+)(out). In terms of biological role, produces ATP from ADP in the presence of a proton gradient across the membrane. The catalytic sites are hosted primarily by the beta subunits. The protein is ATP synthase subunit beta, chloroplastic of Pinus thunbergii (Japanese black pine).